We begin with the raw amino-acid sequence, 653 residues long: Forkhead box protein O1 (653 aa).

2 disordered regions span residues 1 to 64 (MAEA…ASAA) and 117 to 156 (LHPA…SRRN). Phosphothreonine; by PKB/AKT1 or PKB/AKT2 and SGK1 is present on Thr24. Residues 35–64 (SNSATSSPAPSGGATANPDASAGLPPASAA) are compositionally biased toward low complexity. The span at 119-140 (PAPPQPPPPGPLSQHPPVPPAA) shows a compositional bias: pro residues. The segment at residues 157–233 (AWGNLSYADL…VQNEGTGKSS (77 aa)) is a DNA-binding region (fork-head). 2 DNA-binding regions span residues 209–216 (NSIRHNLS) and 232–235 (SSWW). Ser210 is modified (phosphoserine; by STK4/MST1). Residues Ser216, Ser232, and Ser233 each carry the phosphoserine modification. Residues 232 to 335 (SSWWMLNPEG…FSPIMTEQDD (104 aa)) form a disordered region. Residues Lys243 and Lys246 each carry the N6-acetyllysine modification. Ser247 is subject to Phosphoserine; by CDK1. Arg249 and Arg251 each carry omega-N-methylarginine; by PRMT1. Positions 249–251 (RRR) match the Nuclear localization signal motif. At Ser254 the chain carries Phosphoserine; by PKB/AKT1 and SGK1. N6-acetyllysine is present on residues Lys260, Lys263, and Lys272. The segment at 281-561 (GAGDSPGSQF…RLTPVKTPLQ (281 aa)) is sufficient for interaction with NLK. 2 positions are modified to phosphoserine: Ser285 and Ser296. Polar residues predominate over residues 307–324 (NWSTFRPRTSSNASTISG). Ser317 bears the Phosphoserine; by PKB/AKT1 or PKB/AKT2 mark. Ser320 is subject to Phosphoserine; by CK1 and SGK1. Ser323 carries the post-translational modification Phosphoserine. Ser327 is modified (phosphoserine; by DYRK1A). A Phosphothreonine modification is found at Thr331. Residues 361 to 457 (SEISNPENME…GGLNQFNCAQ (97 aa)) are required for interaction with RUNX2. At Lys421 the chain carries N6-acetyllysine. The Required for interaction with SIRT1 motif lies at 460 to 464 (LKELL).

As to quaternary structure, interacts with LRPPRC. Interacts with RUNX2; the interaction inhibits RUNX2 transcriptional activity and mediates the IGF1/insulin-dependent BGLAP expression in osteoblasts Interacts with PPP2R1A; the interaction regulates the dephosphorylation of FOXO1 at Thr-24 and Ser-254 leading to its nuclear import. Interacts with NLK. Interacts with SIRT1; the interaction results in the deacetylation of FOXO1 leading to activation of FOXO1-mediated transcription of genes involved in DNA repair and stress resistance. Binds to CDK1. Interacts with the 14-3-3 proteins, YWHAG and YWHAZ; the interactions require insulin-stimulated phosphorylation on Thr-24, promote nuclear exit and loss of transcriptional activity. Interacts with SKP2; the interaction ubiquitinates FOXO1 leading to its proteasomal degradation. The interaction requires the presence of KRIT1. Interacts (via the C-terminal half) with ATF4 (via its DNA-binding domain); the interaction occurs in osteoblasts, regulates glucose homeostasis via suppression of beta-cell proliferation and subsequent decrease in insulin production. Interacts with PRMT1; the interaction methylates FOXO1, prevents PKB/AKT1 phosphorylation and retains FOXO1 in the nucleus. Interacts with EP300 and CREBBP; the interactions acetylate FOXO1. Interacts with SIRT2; the interaction is disrupted in response to oxidative stress or serum deprivation, leading to increased level of acetylated FOXO1, which promotes stress-induced autophagy by stimulating E1-like activating enzyme ATG7. Interacts (acetylated form) with ATG7; the interaction is increased in response to oxidative stress or serum deprivation and promotes the autophagic process leading to cell death. Interacts (acetylated form) with PPARG. Interacts with XBP1; this interaction is direct and leads to FOXO1 ubiquitination and degradation via the proteasome pathway. Interacts with WDFY2. Forms a complex with WDFY2 and AKT1. Interacts with CRY1. Interacts with PPIA/CYPA; the interaction promotes FOXO1 dephosphorylation, nuclear accumulation and transcriptional activity. Interacts with TOX4; FOXO1 is required for full induction of TOX4-dependent activity and the interaction is inhibited by insulin. Interacts (when phosphorylated on Ser-254) with STUB1/CHIP. Post-translationally, phosphorylation by NLK promotes nuclear export and inhibits the transcriptional activity. In response to growth factors, phosphorylation on Thr-24, Ser-254 and Ser-320 by PKB/AKT1 promotes nuclear export and inactivation of transactivational activity. Phosphorylation on Thr-24 is required for binding 14-3-3 proteins. Phosphorylation of Ser-254 decreases DNA-binding activity and promotes the phosphorylation of Thr-24 and Ser-317, permitting phosphorylation of Ser-320 and Ser-323, probably by CDK1, leading to nuclear exclusion and loss of function. Stress signals, such as response to oxygen or nitric oxide, attenuate the PKB/AKT1-mediated phosphorylation leading to nuclear retention. Phosphorylation of Ser-327 is independent of IGF1 and leads to reduced function. Dephosphorylated on Thr-24 and Ser-254 by PP2A in beta-cells under oxidative stress leading to nuclear retention. Phosphorylation of Ser-247 by CDK1 disrupts binding of 14-3-3 proteins leading to nuclear accumulation and has no effect on DNA binding nor transcriptional activity. Phosphorylation by STK4/MST1 on Ser-210, upon oxidative stress, inhibits binding to 14-3-3 proteins and nuclear export. PPIA/CYPA promotes its dephosphorylation on Ser-254. In terms of processing, ubiquitinated by SKP2. Ubiquitination leads to proteasomal degradation. Ubiquitinated by STUB1/CHIP; when Ser-254 is phosphorylated. Methylation inhibits AKT1-mediated phosphorylation at Ser-254 and is increased by oxidative stress. Post-translationally, acetylated. Acetylation at Lys-260 and Lys-272 are necessary for autophagic cell death induction. Deacetylated by SIRT2 in response to oxidative stress or serum deprivation, thereby negatively regulating FOXO1-mediated autophagic cell death. Once in the nucleus, acetylated by CREBBP/EP300. Acetylation diminishes the interaction with target DNA and attenuates the transcriptional activity. It increases the phosphorylation at Ser-254. Deacetylation by SIRT1 results in reactivation of the transcriptional activity. Oxidative stress by hydrogen peroxide treatment appears to promote deacetylation and uncoupling of insulin-induced phosphorylation. By contrast, resveratrol acts independently of acetylation. Acetylated at Lys-421, promoting its localization to the nucleus and transcription factor activity. Deacetylation at Lys-421 by SIRT6, promotes its translocation into the cytoplasm, preventing its transcription factor activity. Deacetylation and subsequent inhibition by SIRT6 has different effects depending on cell types: it inhibits gluconeogenesis in hepatocytes, promotes glucose sensing in pancreatic beta-cells and regulates lipid catabolism in brown adipocytes.

The protein resides in the cytoplasm. It localises to the nucleus. Functionally, transcription factor that is the main target of insulin signaling and regulates metabolic homeostasis in response to oxidative stress. Binds to the insulin response element (IRE) with consensus sequence 5'-TT[G/A]TTTTG-3' and the related Daf-16 family binding element (DBE) with consensus sequence 5'-TT[G/A]TTTAC-3'. Activity suppressed by insulin. Main regulator of redox balance and osteoblast numbers and controls bone mass. Orchestrates the endocrine function of the skeleton in regulating glucose metabolism. Also acts as a key regulator of chondrogenic commitment of skeletal progenitor cells in response to lipid availability: when lipids levels are low, translocates to the nucleus and promotes expression of SOX9, which induces chondrogenic commitment and suppresses fatty acid oxidation. Acts synergistically with ATF4 to suppress osteocalcin/BGLAP activity, increasing glucose levels and triggering glucose intolerance and insulin insensitivity. Also suppresses the transcriptional activity of RUNX2, an upstream activator of osteocalcin/BGLAP. Acts as an inhibitor of glucose sensing in pancreatic beta cells by acting as a transcription repressor and suppressing expression of PDX1. In hepatocytes, promotes gluconeogenesis by acting together with PPARGC1A and CEBPA to activate the expression of genes such as IGFBP1, G6PC1 and PCK1. Also promotes gluconeogenesis by directly promoting expression of PPARGC1A and G6PC1. Important regulator of cell death acting downstream of CDK1, PKB/AKT1 and STK4/MST1. Promotes neural cell death. Mediates insulin action on adipose tissue. Regulates the expression of adipogenic genes such as PPARG during preadipocyte differentiation and, adipocyte size and adipose tissue-specific gene expression in response to excessive calorie intake. Regulates the transcriptional activity of GADD45A and repair of nitric oxide-damaged DNA in beta-cells. Required for the autophagic cell death induction in response to starvation or oxidative stress in a transcription-independent manner. Mediates the function of MLIP in cardiomyocytes hypertrophy and cardiac remodeling. Positive regulator of apoptosis in cardiac smooth muscle cells as a result of its transcriptional activation of pro-apoptotic genes. Regulates endothelial cell (EC) viability and apoptosis in a PPIA/CYPA-dependent manner via transcription of CCL2 and BCL2L11 which are involved in EC chemotaxis and apoptosis. In Ictidomys tridecemlineatus (Thirteen-lined ground squirrel), this protein is Forkhead box protein O1 (FOXO1).